The sequence spans 348 residues: Protein DMR6-LIKE OXYGENASE 2 (348 aa).

A Fe2OG dioxygenase domain is found at 194–294 (KHGQHMAINY…RISIPTFYCP (101 aa)). The Fe cation site is built by His219, Asp221, and His275. 2-oxoglutarate is bound at residue Arg285.

The protein belongs to the iron/ascorbate-dependent oxidoreductase family. It depends on Fe(2+) as a cofactor.

It catalyses the reaction salicylate + NADH + O2 + H(+) = 2,3-dihydroxybenzoate + NAD(+) + H2O. In terms of biological role, converts salicylic acid (SA) to 2,3-dihydroxybenzoic acid (2,3-DHBA). Negative regulator of defense against Hyaloperonospora arabidopsidis. (Microbial infection) Confers susceptibility to the downy mildew pathogen Hyaloperonospora arabidopsidis. The chain is Protein DMR6-LIKE OXYGENASE 2 from Arabidopsis thaliana (Mouse-ear cress).